The sequence spans 212 residues: uncharacterized protein (212 aa).

This sequence belongs to the flavoredoxin family. FMN is required as a cofactor.

This is an uncharacterized protein from Methanothermobacter thermautotrophicus (strain ATCC 29096 / DSM 1053 / JCM 10044 / NBRC 100330 / Delta H) (Methanobacterium thermoautotrophicum).